The chain runs to 1094 residues: Probable serine/threonine-protein kinase kinX (1094 aa).

The 260-residue stretch at 22–281 folds into the Protein kinase domain; the sequence is LDFISEIGSG…QTLKQIKTTL (260 aa). Residues 28 to 36 and Lys49 each bind ATP; that span reads IGSGGFGKV. Asp146 (proton acceptor) is an active-site residue. Disordered regions lie at residues 301–884 and 946–1083; these read TTNG…SVED and IKVE…PNNK. Residues 330-344 are compositionally biased toward acidic residues; sequence YDDDDDDDDDDDDND. A compositionally biased stretch (polar residues) spans 351–373; that stretch reads SDNSNSNVTLESNSNYNSSTING. Low complexity predominate over residues 374-387; sequence QEQQEQQEQQQQQQ. The segment covering 393-408 has biased composition (acidic residues); the sequence is DEGEIEQDDDNIEVYD. Residues 410-424 show a composition bias toward basic and acidic residues; that stretch reads DYQKKLEEHQKELLE. 3 stretches are compositionally biased toward acidic residues: residues 433–454, 480–496, and 503–523; these read STDENEVYEQEEEEEEEDEEEQ, DDEDDDDDEEDEEEGDE, and DFDEDDEDDEEYDEDEDDEDE. Composition is skewed to low complexity over residues 526 to 542 and 564 to 585; these read IQYYQQQLQYQQQLQKQ and RQLQQQQQQQQQQQQQQQQHQQ. Over residues 587–602 the composition is skewed to acidic residues; it reads YDDDDDDDDEEEEEYD. Basic and acidic residues predominate over residues 603 to 639; that stretch reads DVIRHDTDSEEESKDKTPLPWDQHFEKQKESENKVEQ. Residues 650 to 661 are compositionally biased toward low complexity; the sequence is QETEQQQQQQQQ. Positions 670–801 are enriched in basic and acidic residues; the sequence is PTKVEDVKVE…EPVEEVKVEE (132 aa). The interval 676–978 is 40 X 9 AA approximate repeats of V-K-V-E-E-P-V-E-E; the sequence is VKVETEEQTK…PVKVEVASPV (303 aa). Positions 802-816 are enriched in acidic residues; sequence PVEEVEAEESVQEPV. 2 stretches are compositionally biased toward basic and acidic residues: residues 817 to 884 and 946 to 971; these read EEVK…SVED and IKVEEPIKVEEPIKVEEPIKVEEPVK. Composition is skewed to low complexity over residues 972 to 985 and 992 to 1011; these read VEVASPVVQEQPPQ and VVSTSTITIASSPQQSSNSP. A compositionally biased stretch (polar residues) spans 1016 to 1031; the sequence is VKQPQQQEIEVNSTPI. Residues 1032–1050 are compositionally biased toward low complexity; the sequence is KQQQQQQQTPTQQTQTPTK.

The protein belongs to the protein kinase superfamily. TKL Ser/Thr protein kinase family.

It catalyses the reaction L-seryl-[protein] + ATP = O-phospho-L-seryl-[protein] + ADP + H(+). The catalysed reaction is L-threonyl-[protein] + ATP = O-phospho-L-threonyl-[protein] + ADP + H(+). In Dictyostelium discoideum (Social amoeba), this protein is Probable serine/threonine-protein kinase kinX (kinX).